A 540-amino-acid chain; its full sequence is IQ motif and ankyrin repeat domain-containing protein 1 (540 aa).

Residues 1–17 are compositionally biased toward low complexity; sequence MSTKKGGPKAASGKGQA. Residues 1–62 form a disordered region; that stretch reads MSTKKGGPKA…PQAPAAPTAE (62 aa). Residues 62–91 form the IQ domain; the sequence is EDKAAIVIQCAFRQYLARRELARRCQERQE. 2 ANK repeats span residues 191-220 and 224-253; these read HGNTPLSEAAAGGQTMAIQLLAELGANPNT and FGRTPLYRAAFGGHLEAVEELLKIGADPRM. Residues 281–388 are a coiled coil; that stretch reads LTEAMLKNME…EETLAMARLE (108 aa).

The sequence is that of IQ motif and ankyrin repeat domain-containing protein 1 from Mus musculus (Mouse).